The chain runs to 252 residues: 14-3-3 protein homolog 1 (252 aa).

The protein belongs to the 14-3-3 family.

The chain is 14-3-3 protein homolog 1 from Schistosoma mansoni (Blood fluke).